The chain runs to 348 residues: Dihydroorotase (348 aa).

Residues His-17 and His-19 each contribute to the Zn(2+) site. Substrate contacts are provided by residues 19 to 21 and Asn-45; that span reads HLR. Residues Lys-103, His-140, and His-178 each contribute to the Zn(2+) site. Lys-103 bears the N6-carboxylysine mark. A substrate-binding site is contributed by His-140. Leu-223 is a substrate binding site. Asp-251 provides a ligand contact to Zn(2+). Asp-251 is a catalytic residue. Positions 255 and 267 each coordinate substrate.

The protein belongs to the metallo-dependent hydrolases superfamily. DHOase family. Class II DHOase subfamily. As to quaternary structure, homodimer. The cofactor is Zn(2+).

It catalyses the reaction (S)-dihydroorotate + H2O = N-carbamoyl-L-aspartate + H(+). It participates in pyrimidine metabolism; UMP biosynthesis via de novo pathway; (S)-dihydroorotate from bicarbonate: step 3/3. In terms of biological role, catalyzes the reversible cyclization of carbamoyl aspartate to dihydroorotate. The chain is Dihydroorotase from Escherichia coli O157:H7.